The chain runs to 472 residues: Eukaryotic translation initiation factor 2 subunit 3 (472 aa).

Ala-2 is subject to N-acetylalanine. Phosphoserine is present on Ser-16. The tr-type G domain maps to 39–248 (QATINIGTIG…IVKKIPVPPR (210 aa)). Residues 48 to 55 (GHVAHGKS) form a G1 region. 51–56 (AHGKST) serves as a coordination point for GTP. The segment at 76–80 (NITIK) is G2. The G3 stretch occupies residues 134 to 137 (DCPG). GTP-binding positions include 190-193 (NKID) and 225-227 (SAQ). The tract at residues 190-193 (NKID) is G4. The segment at 225-227 (SAQ) is G5. The interacts with CDC123 stretch occupies residues 457–469 (GQIRRGVTIKPTV).

Belongs to the TRAFAC class translation factor GTPase superfamily. Classic translation factor GTPase family. EIF2G subfamily. In terms of assembly, eukaryotic translation initiation factor 2 eIF2 is a heterotrimeric complex composed of an alpha (EIF2S1), a beta (EIF2S2) and a gamma (EIF2S3) chain. eIF2 is member of the 43S pre-initiation complex (43S PIC). Interacts (via C-terminus) with CDC123; the interaction is direct.

It is found in the cytoplasm. Its subcellular location is the cytosol. The enzyme catalyses GTP + H2O = GDP + phosphate + H(+). Member of the eIF2 complex that functions in the early steps of protein synthesis by forming a ternary complex with GTP and initiator tRNA. This complex binds to a 40S ribosomal subunit, followed by mRNA binding to form the 43S pre-initiation complex (43S PIC). Junction of the 60S ribosomal subunit to form the 80S initiation complex is preceded by hydrolysis of the GTP bound to eIF2 and release of an eIF2-GDP binary complex. In order for eIF2 to recycle and catalyze another round of initiation, the GDP bound to eIF2 must exchange with GTP by way of a reaction catalyzed by eIF-2B. The sequence is that of Eukaryotic translation initiation factor 2 subunit 3 (EIF2S3) from Bos taurus (Bovine).